The sequence spans 926 residues: Alanine--tRNA ligase (926 aa).

Zn(2+) contacts are provided by H615, H619, C719, and H723. Residues R887 to D910 form a disordered region. Residues V888–P904 are compositionally biased toward gly residues.

Belongs to the class-II aminoacyl-tRNA synthetase family. The cofactor is Zn(2+).

Its subcellular location is the cytoplasm. It catalyses the reaction tRNA(Ala) + L-alanine + ATP = L-alanyl-tRNA(Ala) + AMP + diphosphate. Its function is as follows. Catalyzes the attachment of alanine to tRNA(Ala) in a two-step reaction: alanine is first activated by ATP to form Ala-AMP and then transferred to the acceptor end of tRNA(Ala). Also edits incorrectly charged Ser-tRNA(Ala) and Gly-tRNA(Ala) via its editing domain. The sequence is that of Alanine--tRNA ligase from Halorubrum lacusprofundi (strain ATCC 49239 / DSM 5036 / JCM 8891 / ACAM 34).